The chain runs to 806 residues: Volume-regulated anion channel subunit LRRC8E (806 aa).

Topologically, residues 1-22 are cytoplasmic; that stretch reads MIPVAEFKQFTEQQPAFKVLKP. A helical transmembrane segment spans residues 23–43; sequence WWDVLAEYITYAMLMIGVFGC. Residues 44–130 lie on the Extracellular side of the membrane; that stretch reads TLQVTQDKII…YETALHWYAK (87 aa). Residues Cys-54 and Cys-311 are joined by a disulfide bond. N-linked (GlcNAc...) asparagine glycosylation is found at Asn-57 and Asn-80. The disordered stretch occupies residues 75–104; the sequence is QSSASNDSDLETTVPPPTATSSPPREMSGL. Residues 131–151 form a helical membrane-spanning segment; that stretch reads YFPYLVVIHTLIFIICGNFWF. The Cytoplasmic segment spans residues 152-275; it reads KFPGTSSKIE…MRQTVLKVCK (124 aa). A disordered region spans residues 182–217; that stretch reads EVSGESSQEKPNQERSIDRELSKPNFEEGSPATADL. Positions 188–207 are enriched in basic and acidic residues; the sequence is SQEKPNQERSIDRELSKPNF. Residues 276–296 form a helical membrane-spanning segment; sequence FVLITIYNAVLVGKIHFIVPC. Over 297-323 the chain is Extracellular; the sequence is SVHTEDMTGYNSFCCNHTKAHLFSKLA. An N-linked (GlcNAc...) asparagine glycan is attached at Asn-312. The helical transmembrane segment at 324 to 344 threads the bilayer; that stretch reads ISYLCFLGVYGLTCFYTLYWL. The Cytoplasmic portion of the chain corresponds to 345 to 806; sequence FRRPLKEYSF…VDVRDKFKED (462 aa). LRR repeat units lie at residues 569–589, 593–614, 616–637, 641–662, 664–685, 687–708, 710–731, 733–754, and 756–777; these read HLQKFSIHNDGTKLLTLNALK, LVKELELVRCELERIPHAVFSL, NLQVLDLKENTLHTIEEIISLQ, KLSVLRLWHNQIAYIPDHIRKL, GLEELSLNRNKILVIPSQLFLC, KLRHLDLSFNEIRELPPEIGVL, LLQYLGLSGNFLEDLPTELFFC, KLKTLKLGQNRLASLSPKVGSL, and CLVKLELKGNRMDMLPPEIGNC.

Belongs to the LRRC8 family. Heterohexamer; oligomerizes with other LRRC8 proteins (lrrc8a, lrrc8c, lrrc8d and/or lrrc8b) to form a heterohexamer. Detected in a channel complex that contains lrrc8a, lrrc8c and lrrc8e. In vivo, the subunit composition may depend primarily on expression levels, and heterooligomeric channels containing various proportions of the different LRRC8 proteins may coexist.

Its subcellular location is the cell membrane. It localises to the endoplasmic reticulum membrane. The protein localises to the lysosome membrane. It catalyses the reaction chloride(in) = chloride(out). The catalysed reaction is iodide(out) = iodide(in). It carries out the reaction taurine(out) = taurine(in). The enzyme catalyses 2',3'-cGAMP(out) = 2',3'-cGAMP(in). Non-essential component of the volume-regulated anion channel (VRAC, also named VSOAC channel), an anion channel required to maintain a constant cell volume in response to extracellular or intracellular osmotic changes. The VRAC channel conducts iodide better than chloride and can also conduct organic osmolytes like taurine. Mediates efflux of amino acids, such as aspartate, in response to osmotic stress. The VRAC channel also mediates transport of immunoreactive cyclic dinucleotide GMP-AMP (2'-3'-cGAMP), an immune messenger produced in response to DNA virus in the cytosol. Channel activity requires lrrc8a plus at least one other family member (lrrc8b, lrrc8c, lrrc8d or lrrc8e); channel characteristics depend on the precise subunit composition. Also plays a role in lysosome homeostasis by forming functional lysosomal VRAC channels in response to low cytoplasmic ionic strength condition: lysosomal VRAC channels are necessary for the formation of large lysosome-derived vacuoles, which store and then expel excess water to maintain cytosolic water homeostasis. The protein is Volume-regulated anion channel subunit LRRC8E of Xenopus laevis (African clawed frog).